Reading from the N-terminus, the 64-residue chain is Toxin BmKIT3 (64 aa).

The LCN-type CS-alpha/beta domain maps to 1 to 61; it reads DGYIRGSNGC…TWKSESNTCG (61 aa). 4 cysteine pairs are disulfide-bonded: cysteine 10–cysteine 60, cysteine 14–cysteine 35, cysteine 21–cysteine 42, and cysteine 25–cysteine 44. Cysteine 60 bears the Cysteine amide mark.

The protein belongs to the long (4 C-C) scorpion toxin superfamily. Sodium channel inhibitor family. Beta subfamily. Expressed by the venom gland.

It is found in the secreted. Functionally, depressant insect beta-toxins cause a transient contraction paralysis followed by a slow flaccid paralysis. They bind voltage-independently at site-4 of sodium channels (Nav) and shift the voltage of activation toward more negative potentials thereby affecting sodium channel activation and promoting spontaneous and repetitive firing. The polypeptide is Toxin BmKIT3 (Olivierus martensii (Manchurian scorpion)).